The following is a 378-amino-acid chain: Ribosomal RNA large subunit methyltransferase G (378 aa).

The protein belongs to the methyltransferase superfamily. RlmG family.

The protein resides in the cytoplasm. The enzyme catalyses guanosine(1835) in 23S rRNA + S-adenosyl-L-methionine = N(2)-methylguanosine(1835) in 23S rRNA + S-adenosyl-L-homocysteine + H(+). In terms of biological role, specifically methylates the guanine in position 1835 (m2G1835) of 23S rRNA. This is Ribosomal RNA large subunit methyltransferase G from Salmonella arizonae (strain ATCC BAA-731 / CDC346-86 / RSK2980).